Here is a 317-residue protein sequence, read N- to C-terminus: Ribosomal protein L11 methyltransferase (317 aa).

T139, G162, D184, and N226 together coordinate S-adenosyl-L-methionine. The disordered stretch occupies residues 274–297 (EHVATRPDPASPGGDRRAGRGDAG).

Belongs to the methyltransferase superfamily. PrmA family.

It is found in the cytoplasm. It carries out the reaction L-lysyl-[protein] + 3 S-adenosyl-L-methionine = N(6),N(6),N(6)-trimethyl-L-lysyl-[protein] + 3 S-adenosyl-L-homocysteine + 3 H(+). Its function is as follows. Methylates ribosomal protein L11. The chain is Ribosomal protein L11 methyltransferase from Sorangium cellulosum (strain So ce56) (Polyangium cellulosum (strain So ce56)).